Reading from the N-terminus, the 358-residue chain is Aromatic amino acid aminotransferase (358 aa).

At lysine 222 the chain carries N6-(pyridoxal phosphate)lysine.

This sequence belongs to the class-II pyridoxal-phosphate-dependent aminotransferase family. As to quaternary structure, homodimer. It depends on pyridoxal 5'-phosphate as a cofactor.

It catalyses the reaction an aromatic L-alpha-amino acid + 2-oxoglutarate = an aromatic oxo-acid + L-glutamate. Its function is as follows. Aminotransferase that catalyzes the conversion of aromatic amino acids and 2-oxoglutarate into corresponding aromatic oxo acids and L-glutamate. In Mycobacterium sp. (strain KMS), this protein is Aromatic amino acid aminotransferase.